Reading from the N-terminus, the 763-residue chain is Polyribonucleotide nucleotidyltransferase (763 aa).

Asp526 and Asp532 together coordinate Mg(2+). The 60-residue stretch at 592 to 651 (PRITTIKVPVDKIGEVIGPKGKMINSITEETGAQISIEDDGTVFVGAADGLSAQAAIDKI) folds into the KH domain. The S1 motif domain occupies 663–732 (GERFLGTVVK…NRGKISLVLV (70 aa)). Residues 739-763 (SAESAGDKGAEKAEGAAADVTPAEA) are disordered. A compositionally biased stretch (basic and acidic residues) spans 743 to 752 (AGDKGAEKAE).

It belongs to the polyribonucleotide nucleotidyltransferase family. It depends on Mg(2+) as a cofactor.

The protein resides in the cytoplasm. The enzyme catalyses RNA(n+1) + phosphate = RNA(n) + a ribonucleoside 5'-diphosphate. Functionally, involved in mRNA degradation. Catalyzes the phosphorolysis of single-stranded polyribonucleotides processively in the 3'- to 5'-direction. The chain is Polyribonucleotide nucleotidyltransferase from Mycolicibacterium smegmatis (strain ATCC 700084 / mc(2)155) (Mycobacterium smegmatis).